Consider the following 86-residue polypeptide: Putative regulatory protein Dvul_2085 (86 aa).

This sequence belongs to the RemA family.

In Nitratidesulfovibrio vulgaris (strain DP4) (Desulfovibrio vulgaris), this protein is Putative regulatory protein Dvul_2085.